Reading from the N-terminus, the 458-residue chain is Flavonol 3-O-glucosyltransferase UGT76E12 (458 aa).

Catalysis depends on His-25, which acts as the Proton acceptor. His-25 lines the an anthocyanidin pocket. Asp-118 acts as the Charge relay in catalysis. UDP-alpha-D-glucose contacts are provided by Thr-140, Ala-339, Gln-341, His-356, Trp-359, Asn-360, Ser-361, and Glu-364. Gly-379 contacts an anthocyanidin. UDP-alpha-D-glucose is bound by residues Asp-380 and Gln-381.

This sequence belongs to the UDP-glycosyltransferase family.

The catalysed reaction is a flavonol + UDP-alpha-D-glucose = a flavonol 3-O-beta-D-glucoside + UDP + H(+). It catalyses the reaction a 7-O-hydroxy-flavonol + UDP-alpha-D-glucose = a flavonol 7-O-beta-D-glucoside + UDP + H(+). Functionally, possesses quercetin 3-O-glucosyltransferase and 7-O-glucosyltransferase activities in vitro. The protein is Flavonol 3-O-glucosyltransferase UGT76E12 of Arabidopsis thaliana (Mouse-ear cress).